The primary structure comprises 302 residues: S-adenosylmethionine sensor upstream of mTORC1 (302 aa).

S-adenosyl-L-homocysteine is bound by residues Arg73, Gly132, and Asp150. 7 residues coordinate S-adenosyl-L-methionine: Arg73, Gly132, Asp150, Leu151, Asp162, Phe163, and Ser196. The S-adenosyl-L-homocysteine site is built by Asp162, Phe163, and Ser196.

Belongs to the BMT2/SAMTOR family.

Its function is as follows. S-adenosyl-L-methionine-binding protein. It is unclear whether this protein acts as a sensor of S-adenosyl-L-methionine to signal methionine sufficiency to mTORC1. Probably acts as a S-adenosyl-L-methionine-dependent methyltransferase. The polypeptide is S-adenosylmethionine sensor upstream of mTORC1 (Drosophila melanogaster (Fruit fly)).